We begin with the raw amino-acid sequence, 68 residues long: Protein DsrB (68 aa).

The protein belongs to the DsrB family.

In Sodalis glossinidius (strain morsitans), this protein is Protein DsrB.